Here is a 319-residue protein sequence, read N- to C-terminus: Protease HtpX homolog (319 aa).

The next 2 membrane-spanning stretches (helical) occupy residues T6 to G26 and G28 to S48. H130 provides a ligand contact to Zn(2+). Residue E131 is part of the active site. Residue H134 coordinates Zn(2+). 2 consecutive transmembrane segments (helical) span residues L145–G165 and P172–V192. E201 contributes to the Zn(2+) binding site. A disordered region spans residues M277–S319.

The protein belongs to the peptidase M48B family. The cofactor is Zn(2+).

It localises to the cell inner membrane. This chain is Protease HtpX homolog, found in Rhizobium meliloti (strain 1021) (Ensifer meliloti).